The following is a 1500-amino-acid chain: DNA-directed RNA polymerase subunit beta' (1500 aa).

Zn(2+) contacts are provided by cysteine 60, cysteine 62, cysteine 75, and cysteine 78. The tract at residues 180 to 199 (DLGGMETAQRSTQRQIEEDY) is disordered. Mg(2+) contacts are provided by aspartate 626, aspartate 628, and aspartate 630. Zn(2+) is bound by residues cysteine 1002, cysteine 1075, cysteine 1082, and cysteine 1085. The disordered stretch occupies residues 1440–1500 (EVQQAEKSAE…DSDHPDLSSL (61 aa)). Polar residues predominate over residues 1449 to 1468 (EPTTTALPTTNGHQAPQSDT).

Belongs to the RNA polymerase beta' chain family. In terms of assembly, the RNAP catalytic core consists of 2 alpha, 1 beta, 1 beta' and 1 omega subunit. When a sigma factor is associated with the core the holoenzyme is formed, which can initiate transcription. Requires Mg(2+) as cofactor. Zn(2+) is required as a cofactor.

The enzyme catalyses RNA(n) + a ribonucleoside 5'-triphosphate = RNA(n+1) + diphosphate. DNA-dependent RNA polymerase catalyzes the transcription of DNA into RNA using the four ribonucleoside triphosphates as substrates. This is DNA-directed RNA polymerase subunit beta' from Chloroflexus aggregans (strain MD-66 / DSM 9485).